A 462-amino-acid chain; its full sequence is Putative F-box protein At1g12855 (462 aa).

Basic and acidic residues predominate over residues methionine 1–glutamine 22. Residues methionine 1 to arginine 59 are disordered. Residues arginine 28–glycine 40 are compositionally biased toward basic residues. The 46-residue stretch at valine 65 to arginine 110 folds into the F-box domain.

This chain is Putative F-box protein At1g12855, found in Arabidopsis thaliana (Mouse-ear cress).